We begin with the raw amino-acid sequence, 351 residues long: MAAAANSGSSLPLFDCPTWAGKPPPGLHLDVVKGDKLIEKLIIDEKKYYLFGRNPDLCDFTIDHQSCSRVHAALVYHKHLKRVFLIDLNSTHGTFLGHIRLEPHKPQQIPIDSTVSFGASTRAYTLREKPQTLPSAVKGDEKMGGEDDELKGLLGLPEEETELDNLTEFNTAHNKRISTLTIEEGNLDIQRPKRKRKNSRVTFSEDDEIINPEDVDPSVGRFRNMVQTAVVPVKKKRVEGPGSLVLEESGSRRMQNFAFSGGLYGGLPPTHSEAGSQPHGIHGTALIGGLPMPYPNLAPDVDLTPVVPSAVNMNPAPNPAVYNPEAVNEPKKKKYAKEAWPGKKPTPSLLI.

Residues 1–142 (MAAAANSGSS…LPSAVKGDEK (142 aa)) are interaction with CDC5L, SF3B1 and MELK. Residues 49–101 (YLFGRNPDLCDFTIDHQSCSRVHAALVYHKHLKRVFLIDLNSTHGTFLGHIRL) form the FHA domain. Positions 143-224 (MGGEDDELKG…VDPSVGRFRN (82 aa)) are interaction with EED. The residue at position 161 (Thr161) is a Phosphothreonine; by CK2; in vitro. Ser178 bears the Phosphoserine; by PKA; in vitro mark. 2 consecutive short sequence motifs (nuclear localization signal) follow at residues 185–209 (GNLD…DDEI) and 210–240 (INPE…RVEG). The tract at residues 191–200 (RPKRKRKNSR) is involved in PP-1 inhibition. Ser199 bears the Phosphoserine mark. Residues 200-203 (RVTF) are involved in PP-1 binding. The residue at position 204 (Ser204) is a Phosphoserine. Residue Ser249 is modified to Phosphoserine. A Phosphotyrosine modification is found at Tyr264. The segment at 310–329 (AVNMNPAPNPAVYNPEAVNE) is interaction with EED. Residues 316–351 (APNPAVYNPEAVNEPKKKKYAKEAWPGKKPTPSLLI) are disordered. The segment at 330–351 (PKKKKYAKEAWPGKKPTPSLLI) is RNA-binding. Residues 331–337 (KKKKYAK) are involved in PP-1 inhibition. Tyr335 bears the Phosphotyrosine mark.

Interacts with phosphorylated CDC5L, SF3B1 and MELK. Interacts with EED. Part of a complex consisting of PPP1R8, EED, HDAC2 and PP-1. Part of the spliceosome. Interacts with PPP1CA, PPP1CB and PPP1CC. Post-translationally, the N-terminus is blocked. Inactivated by phosphorylation on Ser-199 or Ser-204.

The protein resides in the nucleus. The protein localises to the nucleus speckle. Inhibitor subunit of the major nuclear protein phosphatase-1 (PP-1). It has RNA-binding activity but does not cleave RNA and may target PP-1 to RNA-associated substrates. May also be involved in pre-mRNA splicing. Binds DNA and might act as a transcriptional repressor. Seems to be required for cell proliferation. This Bos taurus (Bovine) protein is Nuclear inhibitor of protein phosphatase 1 (PPP1R8).